Consider the following 226-residue polypeptide: Ribonuclease 3 (226 aa).

Residues 6–128 form the RNase III domain; it reads TNRLQKKLGY…LIGGVFLDSD (123 aa). E41 contacts Mg(2+). D45 is a catalytic residue. 2 residues coordinate Mg(2+): D114 and E117. E117 is a catalytic residue. The region spanning 155 to 225 is the DRBM domain; it reads DPKTRLQEYL…AEQALKLLEL (71 aa).

Belongs to the ribonuclease III family. As to quaternary structure, homodimer. Mg(2+) is required as a cofactor.

It localises to the cytoplasm. The enzyme catalyses Endonucleolytic cleavage to 5'-phosphomonoester.. In terms of biological role, digests double-stranded RNA. Involved in the processing of primary rRNA transcript to yield the immediate precursors to the large and small rRNAs (23S and 16S). Processes some mRNAs, and tRNAs when they are encoded in the rRNA operon. Processes pre-crRNA and tracrRNA of type II CRISPR loci if present in the organism. In Sodalis glossinidius (strain morsitans), this protein is Ribonuclease 3.